The chain runs to 68 residues: MSRLFKITALVPSLSRTRTQRELQNTYFTKLVPYENWFREQQRIQKAGGKIIKVELATGKQGTNAGLQ.

Residues 2–57 (SRLFKITALVPSLSRTRTQRELQNTYFTKLVPYENWFREQQRIQKAGGKIIKVELA) enclose the CpcD-like domain.

Belongs to the phycobilisome linker protein family.

The protein localises to the cellular thylakoid membrane. In terms of biological role, rod linker protein, associated with allophycocyanin. Linker polypeptides determine the state of aggregation and the location of the disk-shaped phycobiliprotein units within the phycobilisome and modulate their spectroscopic properties in order to mediate a directed and optimal energy transfer. The protein is Phycobilisome 7.8 kDa linker polypeptide, allophycocyanin-associated, core (apcC) of Nostoc sp. (strain PCC 7120 / SAG 25.82 / UTEX 2576).